A 218-amino-acid polypeptide reads, in one-letter code: Ribose-5-phosphate isomerase A (218 aa).

Substrate is bound by residues 27–30 (TGST), 80–83 (DGAD), and 93–96 (KGGG). The active-site Proton acceptor is the Glu-102. Lys-120 lines the substrate pocket.

The protein belongs to the ribose 5-phosphate isomerase family. Homodimer.

The catalysed reaction is aldehydo-D-ribose 5-phosphate = D-ribulose 5-phosphate. The protein operates within carbohydrate degradation; pentose phosphate pathway; D-ribose 5-phosphate from D-ribulose 5-phosphate (non-oxidative stage): step 1/1. Its function is as follows. Catalyzes the reversible conversion of ribose-5-phosphate to ribulose 5-phosphate. The chain is Ribose-5-phosphate isomerase A from Thiobacillus denitrificans (strain ATCC 25259 / T1).